Here is a 621-residue protein sequence, read N- to C-terminus: Altered inheritance of mitochondria protein 9, mitochondrial (621 aa).

The transit peptide at 1–40 directs the protein to the mitochondrion; the sequence is MIRSTTAKLGKRCATLRVRASPILRPLVATRCITNKADEV.

This sequence belongs to the AIM9 family.

The protein resides in the mitochondrion. This Zygosaccharomyces rouxii (strain ATCC 2623 / CBS 732 / NBRC 1130 / NCYC 568 / NRRL Y-229) protein is Altered inheritance of mitochondria protein 9, mitochondrial (AIM9).